Consider the following 252-residue polypeptide: Indole-3-glycerol phosphate synthase (252 aa).

Belongs to the TrpC family.

The catalysed reaction is 1-(2-carboxyphenylamino)-1-deoxy-D-ribulose 5-phosphate + H(+) = (1S,2R)-1-C-(indol-3-yl)glycerol 3-phosphate + CO2 + H2O. It participates in amino-acid biosynthesis; L-tryptophan biosynthesis; L-tryptophan from chorismate: step 4/5. The polypeptide is Indole-3-glycerol phosphate synthase (Leptospira interrogans serogroup Icterohaemorrhagiae serovar copenhageni (strain Fiocruz L1-130)).